A 320-amino-acid polypeptide reads, in one-letter code: MIDFRPFYQQIATSHLSAWLETLPLQLKQWEKTAHSDYAKWAKIATSMPTSPTSINLTDKVEAVLAEALPEGEKQYLIYRLKQLMPWRKGPYHLHGVHIDTEWRSDFKWQRVLPHLAPLKDRTILDVGCGNGYHMWRMVGEDAQMVVGIDPTELFLCQFEAVRQLLGNDRRANLIPLGLEQMQPLAAFDTVFSMGVLYHRKSPLDHLSQLKAQLVKGGELVLETLIIDGDINDILTPADRYAKMKNVYFIPSVAALINWLKKIGFKNARCVDQSVTTLAEQRKTEWLENESLVDFLDPTDQRKTIEGLPAPKRAVILANA.

Residues Lys-89, Trp-103, Lys-108, Gly-128, 150–152 (DPT), 179–180 (LE), Met-194, Tyr-198, and Arg-313 contribute to the carboxy-S-adenosyl-L-methionine site.

It belongs to the class I-like SAM-binding methyltransferase superfamily. CmoB family. In terms of assembly, homotetramer.

It carries out the reaction carboxy-S-adenosyl-L-methionine + 5-hydroxyuridine(34) in tRNA = 5-carboxymethoxyuridine(34) in tRNA + S-adenosyl-L-homocysteine + H(+). In terms of biological role, catalyzes carboxymethyl transfer from carboxy-S-adenosyl-L-methionine (Cx-SAM) to 5-hydroxyuridine (ho5U) to form 5-carboxymethoxyuridine (cmo5U) at position 34 in tRNAs. This Haemophilus ducreyi (strain 35000HP / ATCC 700724) protein is tRNA U34 carboxymethyltransferase.